Here is a 191-residue protein sequence, read N- to C-terminus: Protein GrpE (191 aa).

This sequence belongs to the GrpE family. Homodimer.

It is found in the cytoplasm. Participates actively in the response to hyperosmotic and heat shock by preventing the aggregation of stress-denatured proteins, in association with DnaK and GrpE. It is the nucleotide exchange factor for DnaK and may function as a thermosensor. Unfolded proteins bind initially to DnaJ; upon interaction with the DnaJ-bound protein, DnaK hydrolyzes its bound ATP, resulting in the formation of a stable complex. GrpE releases ADP from DnaK; ATP binding to DnaK triggers the release of the substrate protein, thus completing the reaction cycle. Several rounds of ATP-dependent interactions between DnaJ, DnaK and GrpE are required for fully efficient folding. The sequence is that of Protein GrpE from Helicobacter pylori (strain P12).